The primary structure comprises 630 residues: Tyrosinase (630 aa).

Cu cation-binding residues include His-69, His-92, His-101, His-317, His-321, and His-360. A cross-link (2'-(S-cysteinyl)-histidine (Cys-His)) is located at residues 90–92 (CVH).

Belongs to the tyrosinase family. Requires Cu(2+) as cofactor.

The enzyme catalyses 2 L-dopa + O2 = 2 L-dopaquinone + 2 H2O. It carries out the reaction L-tyrosine + O2 = L-dopaquinone + H2O. In terms of biological role, this is a copper-containing oxidase that functions in the formation of pigments such as melanins and other polyphenolic compounds. This is Tyrosinase (tyr1) from Aspergillus fumigatus (strain ATCC MYA-4609 / CBS 101355 / FGSC A1100 / Af293) (Neosartorya fumigata).